Consider the following 221-residue polypeptide: Iron-sulfur cluster repair protein YtfE (221 aa).

This sequence belongs to the RIC family. YtfE subfamily. Homodimer.

Its subcellular location is the cytoplasm. Di-iron-containing protein involved in the repair of iron-sulfur clusters damaged by oxidative and nitrosative stress conditions. This chain is Iron-sulfur cluster repair protein YtfE, found in Edwardsiella ictaluri (strain 93-146).